A 171-amino-acid chain; its full sequence is UPF0398 protein stu0232 (171 aa).

The protein belongs to the UPF0398 family.

The protein is UPF0398 protein stu0232 of Streptococcus thermophilus (strain ATCC BAA-250 / LMG 18311).